The sequence spans 190 residues: Prostaglandin-H2 D-isomerase (190 aa).

Residues 1–22 (MATHHTLWMGLVLLGLLGGLQA) form the signal peptide. N-linked (GlcNAc...) asparagine glycosylation occurs at Asn51. The active-site Nucleophile is the Cys65. Asn78 carries N-linked (GlcNAc...) asparagine glycosylation. A disulfide bond links Cys89 and Cys186.

This sequence belongs to the calycin superfamily. Lipocalin family. Monomer.

Its subcellular location is the rough endoplasmic reticulum. The protein resides in the nucleus membrane. It is found in the golgi apparatus. The protein localises to the cytoplasm. It localises to the perinuclear region. Its subcellular location is the secreted. It catalyses the reaction prostaglandin H2 = prostaglandin D2. Catalyzes the conversion of PGH2 to PGD2, a prostaglandin involved in smooth muscle contraction/relaxation and a potent inhibitor of platelet aggregation. Involved in a variety of CNS functions, such as sedation, NREM sleep and PGE2-induced allodynia, and may have an anti-apoptotic role in oligodendrocytes. Binds small non-substrate lipophilic molecules, including biliverdin, bilirubin, retinal, retinoic acid and thyroid hormone, and may act as a scavenger for harmful hydrophobic molecules and as a secretory retinoid and thyroid hormone transporter. Possibly involved in development and maintenance of the blood-brain, blood-retina, blood-aqueous humor and blood-testis barrier. It is likely to play important roles in both maturation and maintenance of the central nervous system and male reproductive system. Involved in PLA2G3-dependent maturation of mast cells. PLA2G3 is secreted by immature mast cells and acts on nearby fibroblasts upstream to PTDGS to synthesize PGD2, which in turn promotes mast cell maturation and degranulation via PTGDR. This Macaca fuscata fuscata (Japanese macaque) protein is Prostaglandin-H2 D-isomerase (PTGDS).